We begin with the raw amino-acid sequence, 1945 residues long: Rho GTPase-activating protein 21 (1945 aa).

Positions 26–53 (CEVSKNKDGKDQGEPVSPSEDEPFSWPG) are disordered. Residues 29–38 (SKNKDGKDQG) are compositionally biased toward basic and acidic residues. A phosphoserine mark is found at Ser-42 and Ser-63. The region spanning 56 to 165 (TVMLKRTSQG…TLELSVMPKD (110 aa)) is the PDZ domain. Disordered regions lie at residues 210–229 (TAQP…QQTS) and 326–365 (HQTT…DSPP). A compositionally biased stretch (low complexity) spans 347 to 358 (SGHSEGISSSRS). Ser-454 carries the phosphoserine modification. Over residues 499–512 (EATATVNSESQIPD) the composition is skewed to polar residues. The segment at 499–519 (EATATVNSESQIPDSNGERKQ) is disordered. Omega-N-methylarginine is present on residues Arg-549 and Arg-569. 2 disordered regions span residues 573-647 (PVSQ…RPVN) and 674-702 (EVSS…LELP). Residues 589–600 (SNRNFPTTTGVS) show a composition bias toward polar residues. Phosphoserine is present on residues Ser-610 and Ser-619. Over residues 674–696 (EVSSCLPGTSAKTSPQLSENLGT) the composition is skewed to polar residues. Thr-741 carries the post-translational modification Phosphothreonine. Phosphoserine occurs at positions 851, 856, and 875. 2 disordered regions span residues 852 to 879 (HDQE…YDEG) and 902 to 921 (ITDS…SSSE). Basic and acidic residues predominate over residues 866 to 879 (HSSKTERSKSYDEG). The residue at position 876 (Tyr-876) is a Phosphotyrosine. 5 positions are modified to phosphoserine: Ser-918, Ser-920, Ser-948, Ser-1093, and Ser-1109. The interval 924–1091 (SDAAREGWLQ…AKSEPKTQSP (168 aa)) is interaction with ARF1 and ARF6. The PH domain occupies 925-1034 (DAAREGWLQF…WIKTIQESSN (110 aa)). Positions 1080 to 1120 (LGAKSEPKTQSPHSPKEESERKLLSKDDTSPPKDKGTWRRG) are disordered. A compositionally biased stretch (basic and acidic residues) spans 1093-1116 (SPKEESERKLLSKDDTSPPKDKGT). Positions 1141–1333 (VRLDDCPPAH…TLIQHHDWFF (193 aa)) constitute a Rho-GAP domain. Disordered stretches follow at residues 1373–1396 (PGDV…SGKD), 1412–1632 (SRKR…PVFP), 1649–1794 (ARVS…LGGH), and 1846–1945 (RTSA…ETPP). A compositionally biased stretch (low complexity) spans 1377-1395 (SDSATSDSAKSKGSWGSGK). A phosphoserine mark is found at Ser-1412, Ser-1426, and Ser-1427. Composition is skewed to basic and acidic residues over residues 1435–1457 (FFKK…RESE) and 1471–1488 (SNTK…KIPW). A Glycyl lysine isopeptide (Lys-Gly) (interchain with G-Cter in SUMO) cross-link involves residue Lys-1438. Thr-1504 is modified (phosphothreonine). Composition is skewed to low complexity over residues 1531–1556 (SDSG…STSP) and 1569–1589 (TTTS…LDSS). The tract at residues 1579 to 1848 (STTYLTSLDS…WLARERVRTS (270 aa)) is interaction with CTNNA1. Residues 1590-1599 (RLSPEVQSVA) show a composition bias toward polar residues. A compositionally biased stretch (basic and acidic residues) spans 1611-1621 (SELVSEGRPVE). Position 1656 is a phosphoserine (Ser-1656). 2 stretches are compositionally biased toward polar residues: residues 1658-1681 (GSEA…QFSS) and 1729-1738 (STGSLLTPSR). Thr-1669 is modified (phosphothreonine). At Ser-1729 the chain carries Phosphoserine. Residues 1739-1757 (SESEKQEATWKTKIADRLK) show a composition bias toward basic and acidic residues. Residues 1782–1792 (RKNIKRRHTLG) are compositionally biased toward basic residues. Residues 1871-1882 (PISTHSPPSQQP) show a composition bias toward polar residues. A compositionally biased stretch (low complexity) spans 1887–1896 (AATSTLASTS). Residue Thr-1902 is modified to Phosphothreonine. The residue at position 1906 (Ser-1906) is a Phosphoserine. Polar residues predominate over residues 1907 to 1927 (PDQINRESFQNMSQNASSTAN). Residues 1932–1945 (KQSESPDTKAETPP) are compositionally biased toward basic and acidic residues.

In terms of assembly, interacts with CTNNA1. Interacts with GTP-bound ARF1 and probably ARF6. Sumoylated with SUMO2 and SUMO3 in proliferating lymphocytes.

Its subcellular location is the golgi apparatus membrane. The protein resides in the cell junction. It is found in the cytoplasmic vesicle membrane. It localises to the cytoplasm. The protein localises to the cytoskeleton. In terms of biological role, functions as a GTPase-activating protein (GAP) for RHOA and CDC42. Downstream partner of ARF1 which may control Golgi apparatus structure and function. Also required for CTNNA1 recruitment to adherens junctions. The protein is Rho GTPase-activating protein 21 of Mus musculus (Mouse).